The following is a 177-amino-acid chain: Probable DNA-directed RNA polymerase subunit delta (177 aa).

The region spanning 14-81 is the HTH HARE-type domain; that stretch reads CSMIEVVHSV…GENRWGLRSW (68 aa). Residues 93-177 are disordered; that stretch reads PQPKPKKKRK…ETEEEEEEEL (85 aa). Residues 106–177 are compositionally biased toward acidic residues; that stretch reads DGFDDYIEED…ETEEEEEEEL (72 aa).

Belongs to the RpoE family. As to quaternary structure, RNAP is composed of a core of 2 alpha, a beta and a beta' subunits. The core is associated with a delta subunit and one of several sigma factors.

Functionally, participates in both the initiation and recycling phases of transcription. In the presence of the delta subunit, RNAP displays an increased specificity of transcription, a decreased affinity for nucleic acids, and an increased efficiency of RNA synthesis because of enhanced recycling. The polypeptide is Probable DNA-directed RNA polymerase subunit delta (Bacillus cereus (strain AH187)).